The following is a 110-amino-acid chain: Ribonuclease (110 aa).

Glu-73 functions as the Proton acceptor in the catalytic mechanism. The active-site Proton donor is His-102.

The protein belongs to the ribonuclease N1/T1 family.

It localises to the secreted. Functionally, hydrolyzes phosphodiester bonds in RNA, poly- and oligoribonucleotides resulting in 3'-nucleoside monophosphates via 2',3'-cyclophosphate intermediates. This chain is Ribonuclease, found in Niallia circulans (Bacillus circulans).